The sequence spans 109 residues: Nucleoid-associated protein HS_1309 (109 aa).

This sequence belongs to the YbaB/EbfC family. Homodimer.

It localises to the cytoplasm. The protein resides in the nucleoid. Functionally, binds to DNA and alters its conformation. May be involved in regulation of gene expression, nucleoid organization and DNA protection. This chain is Nucleoid-associated protein HS_1309, found in Histophilus somni (strain 129Pt) (Haemophilus somnus).